A 425-amino-acid polypeptide reads, in one-letter code: MTHLLLLLFFSCVQLTTGQFYCADLIQQCAKSAAEYTEQILQYKESAFKSCVRRPACHTERKIFDECFDASVSATHISPPQESTSNDGETRKVTQPPMVKYNSLLKFFTEKSMNFRSALDQCFVRSPFVPKRNFFGPSILDEDAAYARAIYQFDLADRLWGLPELSVTRPSLDTLGVCRTQNTALRVFGSGISRIARASDPKKNNLTSSCMLDEDEITCYRQALDLNSEYIQLIYNRDYALRACIQNLRQQSVCRMNDKSRLRSCLCGVREQYDNDVQAGILQCVKSKSPHIPAMVIEMSSSLDEEPTSAKIQEQVTPAQLTFDTPGAIVNGQCMCACEHSAKNEATRLFANKKNNNDVEKSTQIEKKPEKQGPEIQEEVVEMETVKDEQPPKTSAVRFKENSPRLMQPSEAAGRVFWMNNITIT.

Residues 355–373 (NNNDVEKSTQIEKKPEKQG) are compositionally biased toward basic and acidic residues. The interval 355 to 407 (NNNDVEKSTQIEKKPEKQGPEIQEEVVEMETVKDEQPPKTSAVRFKENSPRLM) is disordered.

This chain is Protein upregulated in glial subsets pugs-5, found in Caenorhabditis elegans.